The primary structure comprises 528 residues: Na(+)/H(+) antiporter NhaB (528 aa).

The next 11 membrane-spanning stretches (helical) occupy residues 23–45, 66–86, 95–115, 139–159, 203–223, 241–261, 310–330, 349–369, 390–410, 448–468, and 476–496; these read FAILSFLVINPVVFYLNPFVAGW, PGGLLAIEAVIIGMTSPSQVL, VLLLLIFMVAGIYFMKQLLLF, AFLSAFLDALTVIAVIIAVAV, LLMHAGVGTALGGVCTMVGEP, LRMSPVTVPVFVAGVLTCFLV, LIIGLAFHLASVGLIGLSVII, EEALPFTALLAVFFAIVGVII, LVIFYIAIGLLSMVSDNVFVG, ATPNGQAAFLFLLTSAIAPLI, and VWMALPYTIVLSIVGILAIQF.

The protein belongs to the NhaB Na(+)/H(+) (TC 2.A.34) antiporter family.

It is found in the cell inner membrane. It carries out the reaction 2 Na(+)(in) + 3 H(+)(out) = 2 Na(+)(out) + 3 H(+)(in). Functionally, na(+)/H(+) antiporter that extrudes sodium in exchange for external protons. In Shewanella piezotolerans (strain WP3 / JCM 13877), this protein is Na(+)/H(+) antiporter NhaB.